The following is a 1317-amino-acid chain: DNA-directed RNA polymerase subunit beta' (1317 aa).

Residues C60, C62, C75, and C78 each contribute to the Zn(2+) site. The segment at 183–209 (ELEDEGAKSDVKRKVRDGGEREMRQLR) is disordered. Mg(2+) is bound by residues D535, D537, and D539. Zn(2+) is bound by residues C890, C967, C974, and C977.

Belongs to the RNA polymerase beta' chain family. The RNAP catalytic core consists of 2 alpha, 1 beta, 1 beta' and 1 omega subunit. When a sigma factor is associated with the core the holoenzyme is formed, which can initiate transcription. Mg(2+) is required as a cofactor. Requires Zn(2+) as cofactor.

The enzyme catalyses RNA(n) + a ribonucleoside 5'-triphosphate = RNA(n+1) + diphosphate. DNA-dependent RNA polymerase catalyzes the transcription of DNA into RNA using the four ribonucleoside triphosphates as substrates. This Mycolicibacterium vanbaalenii (strain DSM 7251 / JCM 13017 / BCRC 16820 / KCTC 9966 / NRRL B-24157 / PYR-1) (Mycobacterium vanbaalenii) protein is DNA-directed RNA polymerase subunit beta'.